Here is a 1190-residue protein sequence, read N- to C-terminus: Ras-specific guanine nucleotide-releasing factor 2 (1190 aa).

Residues 22–133 (EGTKRGFLSK…WMEAIHQASY (112 aa)) enclose the PH 1 domain. Residues 155–193 (ETEKIAANQLRHQLEDQDTEIERLKSEIVALNKTKERMR) adopt a coiled-coil conformation. Residues 205–234 (DIKKIKKVQSFMRGWLCRRKWKTIVQDYIC) form the IQ domain. Positions 243-429 (KRNQIVFTMV…EELSRVMHDE (187 aa)) constitute a DH domain. The 119-residue stretch at 470–588 (PSVERGKLSK…WMSDISQCVD (119 aa)) folds into the PH 2 domain. The N-terminal Ras-GEF domain occupies 635–755 (KVPQIRYASV…LTSSLNSRIG (121 aa)). A disordered region spans residues 713–744 (VDGKSPRLCRKFSSPPPLAVSRTSSPVRARKL). Phosphoserine occurs at positions 725 and 726. Ser736 bears the Phosphoserine; by CDK5 mark. The interval 743–751 (KLSLTSSLN) is regulates proteasomal degradation. Residues Ser745 and Ser749 each carry the phosphoserine modification. Positions 757–826 (LDLTTSSSSS…QPGGQVADST (70 aa)) are disordered. Residues 760–776 (TTSSSSSSPTTTVHSPA) show a composition bias toward low complexity. A compositionally biased stretch (polar residues) spans 798–810 (TDMSPCRSPSTTP). A phosphoserine mark is found at Ser801, Ser805, and Ser925. Residues 955 to 1187 (SAMELAEQIT…YELSLKIEPR (233 aa)) form the Ras-GEF domain. Residues 1052–1081 (ALNRSAIYRLKKTWTKVSKQTKALMDKLQK) form a responsible of the affinity for farnesylated versus geranylgeranylated Ras region.

As to quaternary structure, homooligomer and heterooligomer with RASGRF1. Interacts with Ras and RAC1. Interacts in a calcium-dependent manner with calmodulin. Interacts with CDK5R1 and probably EPB49. Interacts with the AMPA receptor through GRIA1. Interacts with microtubules. In terms of processing, phosphorylated by CDK5; down-regulates RASGRF2-mediated RAC1 activation. Post-translationally, ubiquitinated upon interaction with Ras. Ubiquitination leads to degradation through the 26S proteasome. In terms of tissue distribution, widely expressed. Detected in brain, lung, spleen, pancreas, kidney, liver, heart, mammary gland and skeletal muscle.

The protein resides in the cytoplasm. The protein localises to the cell membrane. It is found in the endoplasmic reticulum membrane. Its function is as follows. Functions as a calcium-regulated nucleotide exchange factor activating both Ras and RAC1 through the exchange of bound GDP for GTP. Preferentially activates HRAS in vivo compared to RRAS based on their different types of prenylation. Functions in synaptic plasticity by contributing to the induction of long term potentiation. This is Ras-specific guanine nucleotide-releasing factor 2 (Rasgrf2) from Rattus norvegicus (Rat).